Consider the following 355-residue polypeptide: Beta-ketoacyl-[acyl-carrier-protein] synthase III (355 aa).

Active-site residues include C122 and H280. The ACP-binding stretch occupies residues 281–285 (QANMR). N311 is an active-site residue.

It belongs to the thiolase-like superfamily. FabH family. As to quaternary structure, homodimer.

Its subcellular location is the cytoplasm. The catalysed reaction is malonyl-[ACP] + acetyl-CoA + H(+) = 3-oxobutanoyl-[ACP] + CO2 + CoA. The protein operates within lipid metabolism; fatty acid biosynthesis. Functionally, catalyzes the condensation reaction of fatty acid synthesis by the addition to an acyl acceptor of two carbons from malonyl-ACP. Catalyzes the first condensation reaction which initiates fatty acid synthesis and may therefore play a role in governing the total rate of fatty acid production. Possesses both acetoacetyl-ACP synthase and acetyl transacylase activities. Its substrate specificity determines the biosynthesis of branched-chain and/or straight-chain of fatty acids. In Kocuria rhizophila (strain ATCC 9341 / DSM 348 / NBRC 103217 / DC2201), this protein is Beta-ketoacyl-[acyl-carrier-protein] synthase III.